The following is a 480-amino-acid chain: Aspartyl/glutamyl-tRNA(Asn/Gln) amidotransferase subunit B (480 aa).

Belongs to the GatB/GatE family. GatB subfamily. Heterotrimer of A, B and C subunits.

It carries out the reaction L-glutamyl-tRNA(Gln) + L-glutamine + ATP + H2O = L-glutaminyl-tRNA(Gln) + L-glutamate + ADP + phosphate + H(+). The enzyme catalyses L-aspartyl-tRNA(Asn) + L-glutamine + ATP + H2O = L-asparaginyl-tRNA(Asn) + L-glutamate + ADP + phosphate + 2 H(+). Allows the formation of correctly charged Asn-tRNA(Asn) or Gln-tRNA(Gln) through the transamidation of misacylated Asp-tRNA(Asn) or Glu-tRNA(Gln) in organisms which lack either or both of asparaginyl-tRNA or glutaminyl-tRNA synthetases. The reaction takes place in the presence of glutamine and ATP through an activated phospho-Asp-tRNA(Asn) or phospho-Glu-tRNA(Gln). This is Aspartyl/glutamyl-tRNA(Asn/Gln) amidotransferase subunit B from Streptococcus thermophilus (strain ATCC BAA-250 / LMG 18311).